We begin with the raw amino-acid sequence, 525 residues long: Peptide chain release factor 3 (525 aa).

The tr-type G domain maps to 9–276; sequence AKRRTFAIIS…GFTRYAPAPQ (268 aa). Residues 18 to 25, 86 to 90, and 140 to 143 each bind GTP; these read SHPDAGKT, DTPGH, and NKFD.

This sequence belongs to the TRAFAC class translation factor GTPase superfamily. Classic translation factor GTPase family. PrfC subfamily.

It localises to the cytoplasm. Its function is as follows. Increases the formation of ribosomal termination complexes and stimulates activities of RF-1 and RF-2. It binds guanine nucleotides and has strong preference for UGA stop codons. It may interact directly with the ribosome. The stimulation of RF-1 and RF-2 is significantly reduced by GTP and GDP, but not by GMP. The polypeptide is Peptide chain release factor 3 (Francisella tularensis subsp. holarctica (strain FTNF002-00 / FTA)).